The chain runs to 439 residues: F-box/FBD/LRR-repeat protein At5g56570 (439 aa).

One can recognise an F-box domain in the interval 35–81 (PTELSDMPDDLIFKIFSFLPFFKEDLATRFISEYGKGLWNPDPNAIF). LRR repeat units follow at residues 155 to 177 (CTTL…WFRL) and 223 to 246 (VPTL…SFWI). The FBD domain occupies 361–411 (VWEKPTVVPECLSTRLEILKWRDYEGTEHEKDMVGYILANATFLQRATFST).

The protein is F-box/FBD/LRR-repeat protein At5g56570 of Arabidopsis thaliana (Mouse-ear cress).